Here is a 428-residue protein sequence, read N- to C-terminus: MTEAMKITLSTQPADGRWGEKATWSINNDGIALHLNGKDDLGLIQRAARKIDGMGIKHVALSGEGWNTDRAWAFWAGYKGPKGQRQVEWPSLDDAQRSELDNRLTIIDWVRDTINAPAEELGPEQLAQRAVDLLCGVAGEKISYRITKGEDLREQGYLGLHTVGRGSERPPVLLALDYNPTGDKEAPVYACLVGKGITFDSGGYSIKQSAFMDSMKSDMGGAATITGALAFAITRGLNKRVKLYLCCADNLISGNAFKLGDIIHYRNGKTVEVMNTDAEGRLVLADGLIDASAQKPELIIDAATLTGAAKTALGNDYHALFSFDDALANRLLASAQAENEAFWRLPLAEFHRNQLPSNFADLNNTGSAAYPAGASTAAGFLSHFVENYHQGWLHIDCSATYRKSAVEQWSAGATGLGVRTIANLLTAE.

The Mn(2+) site is built by Lys195 and Asp200. Lys207 is a catalytic residue. Mn(2+)-binding residues include Asp218, Asp277, and Glu279. The active site involves Arg281.

It belongs to the peptidase M17 family. Homohexamer. Mn(2+) is required as a cofactor.

The protein resides in the cytoplasm. It carries out the reaction Release of an N-terminal amino acid, Xaa, from a peptide or arylamide. Xaa is preferably Glu or Asp but may be other amino acids, including Leu, Met, His, Cys and Gln.. Its function is as follows. Probably plays an important role in intracellular peptide degradation. This Klebsiella pneumoniae subsp. pneumoniae (strain ATCC 700721 / MGH 78578) protein is Peptidase B.